The following is a 925-amino-acid chain: Probable glycoprotein hormone G-protein coupled receptor (925 aa).

Residues 1–27 (MEDRGICPRVLQVLFLVVLILISPVYA) form the signal peptide. The Extracellular segment spans residues 28–529 (AKNDACTKCS…EDIMGYVWLT (502 aa)). The N-linked (GlcNAc...) asparagine glycan is linked to Asn-61. LRR repeat units follow at residues 85 to 106 (KLKY…RVKN), 110 to 131 (SLIT…AFDD), 134 to 155 (QLTQ…NKTS), 156 to 180 (SVTK…GNLP), 181 to 202 (SLEN…IFRQ), 203 to 224 (NTRL…NEDA), 230 to 250 (SLKT…RGLK), and 251 to 273 (NLHF…DSIR). Residue Asn-152 is glycosylated (N-linked (GlcNAc...) asparagine). Asn-212 carries an N-linked (GlcNAc...) asparagine glycan. Positions 299 to 493 (TMQKPSTEEN…PTLIPHSNHT (195 aa)) are disordered. Polar residues predominate over residues 301–318 (QKPSTEENNGQTTASSPT). The 1; truncated repeat unit spans residues 333-349 (STQPHTTSGFGGGGFPG). The segment at 333-461 (STQPHTTSGF…PGGGGFPGGG (129 aa)) is 5 X approximate tandem repeats. Positions 341-362 (GFGGGGFPGGGGGFPGGGGFPA) are enriched in gly residues. 3 repeat units span residues 350 to 384 (GGGG…GFPG), 385 to 419 (GGGG…GFPG), and 420 to 453 (GGGG…GFPG). Positions 365–375 (SKTSTQPHTTS) are enriched in polar residues. Positions 376-397 (GFGGGGFPGGGGGFPGGGGFPA) are enriched in gly residues. Polar residues predominate over residues 400–410 (SKTSTQPHTTS). A compositionally biased stretch (gly residues) spans 411–432 (GFGGGGFPGGGGGFPGGGGFPG). Positions 434–445 (SNTSTQPHTTSN) are enriched in polar residues. A glycan (N-linked (GlcNAc...) asparagine) is linked at Asn-435. The span at 446–462 (SGGGGFPGGGGFPGGGT) shows a compositional bias: gly residues. The 5; truncated repeat unit spans residues 454 to 461 (GGGFPGGG). The segment covering 476-493 (VHQSTADPPTLIPHSNHT) has biased composition (polar residues). A glycan (N-linked (GlcNAc...) asparagine) is linked at Asn-495. A helical transmembrane segment spans residues 530 to 551 (VVSFMVGAVALVANLVVALVLL). Residues 552–561 (TSQRRLNVTR) lie on the Cytoplasmic side of the membrane. A helical transmembrane segment spans residues 562–584 (FLMCNLAFADFILGLYIFILTSV). The Extracellular segment spans residues 585–606 (SAVTRGDYHNYVQQWQNGAGCK). The chain crosses the membrane as a helical span at residues 607 to 628 (ILGFLAVFSSELSLFTLVMMTI). At 629–651 (ERFYAIVHAMHMNARLSFRKTVR) the chain is on the cytoplasmic side. The helical transmembrane segment at 652 to 673 (FMIGGWIFALVMAVVPLTGVSG) threads the bilayer. Residues 674–691 (YSKVAICLPFDVSDATST) lie on the Extracellular side of the membrane. Residues 692–712 (AYVAFLLLVNGASFISVMYLY) form a helical membrane-spanning segment. Residues 713-739 (SRMLYVVVSGGDMEGAPKRNDSKVAKR) lie on the Cytoplasmic side of the membrane. Residues 740–763 (MAILVFTDMLCWAPIAFFGLLAAF) traverse the membrane as a helical segment. Residues 764 to 774 (GQTLLTVTQSK) lie on the Extracellular side of the membrane. A helical membrane pass occupies residues 775-795 (ILLVFFFPINSICNPFLYAFF). Residues 796 to 925 (TKAFKRELFT…QKQKILQSPS (130 aa)) are Cytoplasmic-facing. Positions 904-925 (VTKSSSPPHLKLQKQKILQSPS) are disordered.

Belongs to the G-protein coupled receptor 1 family. FSH/LSH/TSH subfamily.

Its subcellular location is the cell membrane. Its function is as follows. Probable receptor for a glycoprotein hormone. The polypeptide is Probable glycoprotein hormone G-protein coupled receptor (Anthopleura elegantissima (Green aggregating anemone)).